The following is a 79-amino-acid chain: uncharacterized protein (79 aa).

The SpoVT-AbrB domain maps to 10–60; the sequence is EAVLTMDSKGQILLPKELRERAGLKAGDRLVAIAGCDENEEVCCLILVKAE.

This is an uncharacterized protein from Archaeoglobus fulgidus (strain ATCC 49558 / DSM 4304 / JCM 9628 / NBRC 100126 / VC-16).